A 235-amino-acid polypeptide reads, in one-letter code: ATP-dependent Clp protease proteolytic subunit (235 aa).

Ser123 serves as the catalytic Nucleophile. The active site involves His148.

Belongs to the peptidase S14 family. In terms of assembly, fourteen ClpP subunits assemble into 2 heptameric rings which stack back to back to give a disk-like structure with a central cavity, resembling the structure of eukaryotic proteasomes.

It is found in the cytoplasm. It carries out the reaction Hydrolysis of proteins to small peptides in the presence of ATP and magnesium. alpha-casein is the usual test substrate. In the absence of ATP, only oligopeptides shorter than five residues are hydrolyzed (such as succinyl-Leu-Tyr-|-NHMec, and Leu-Tyr-Leu-|-Tyr-Trp, in which cleavage of the -Tyr-|-Leu- and -Tyr-|-Trp bonds also occurs).. Functionally, cleaves peptides in various proteins in a process that requires ATP hydrolysis. Has a chymotrypsin-like activity. Plays a major role in the degradation of misfolded proteins. This Novosphingobium aromaticivorans (strain ATCC 700278 / DSM 12444 / CCUG 56034 / CIP 105152 / NBRC 16084 / F199) protein is ATP-dependent Clp protease proteolytic subunit.